Reading from the N-terminus, the 216-residue chain is Somatotropin (216 aa).

A signal peptide spans 1-26 (MAAGPRTSVLLAFALLCLPWTQEVGA). His45 lines the Zn(2+) pocket. Residues Cys78 and Cys189 are joined by a disulfide bond. Ser131 carries the phosphoserine modification. A Zn(2+)-binding site is contributed by Glu198. Residues Cys206 and Cys214 are joined by a disulfide bond.

This sequence belongs to the somatotropin/prolactin family.

The protein localises to the secreted. Its function is as follows. Plays an important role in growth control. Its major role in stimulating body growth is to stimulate the liver and other tissues to secrete IGF1. It stimulates both the differentiation and proliferation of myoblasts. It also stimulates amino acid uptake and protein synthesis in muscle and other tissues. This is Somatotropin (GH1) from Hippopotamus amphibius (Hippopotamus).